Here is a 432-residue protein sequence, read N- to C-terminus: uncharacterized protein (432 aa).

13 consecutive transmembrane segments (helical) span residues 7–27 (FIGL…PDIY), 29–49 (GIVI…PLPV), 68–88 (EALT…FMLA), 124–144 (FLSM…IALG), 156–176 (FLLL…IIGS), 196–216 (VGFP…YIYF), 241–261 (LVIF…SEIF), 266–286 (FDSV…LVEV), 291–311 (KIDW…GVIV), 326–346 (ILGN…TIIL), 358–378 (IIVP…LILA), 379–399 (VGMS…NAIV), and 412–432 (IGMI…ILYL).

This sequence belongs to the CitM (TC 2.A.11) transporter family.

The protein resides in the cell membrane. This is an uncharacterized protein from Methanocaldococcus jannaschii (strain ATCC 43067 / DSM 2661 / JAL-1 / JCM 10045 / NBRC 100440) (Methanococcus jannaschii).